The primary structure comprises 235 residues: Carbohydrate deacetylase (235 aa).

His-61 and His-124 together coordinate Mg(2+).

The protein belongs to the YdjC deacetylase family. The cofactor is Mg(2+).

Functionally, probably catalyzes the deacetylation of acetylated carbohydrates an important step in the degradation of oligosaccharides. This Bacillus cereus (strain 03BB102) protein is Carbohydrate deacetylase.